The primary structure comprises 240 residues: Transcription factor bHLH101 (240 aa).

Residues Glu-65–Gln-117 enclose the bHLH domain.

As to quaternary structure, homodimer. In terms of tissue distribution, flowers.

The protein localises to the nucleus. This Arabidopsis thaliana (Mouse-ear cress) protein is Transcription factor bHLH101 (BHLH101).